A 331-amino-acid chain; its full sequence is Probable allantoicase (331 aa).

Belongs to the allantoicase family.

It carries out the reaction allantoate + H2O = (S)-ureidoglycolate + urea. It functions in the pathway nitrogen metabolism; (S)-allantoin degradation; (S)-ureidoglycolate from allantoate (aminidohydrolase route): step 1/1. This chain is Probable allantoicase, found in Pseudomonas fluorescens (strain ATCC BAA-477 / NRRL B-23932 / Pf-5).